The chain runs to 525 residues: Keratin, type II cytoskeletal 4 (525 aa).

The segment at 1–145 (MIARQSSVRG…DPEIQKIRTA (145 aa)) is head. An Omega-N-methylarginine modification is found at R13. The interval 146-181 (EREQIKTLNNKFASFIDKVRFLEQQNKVLETKWNLL) is coil 1A. An IF rod domain is found at 146 to 459 (EREQIKTLNN…KLLEGEECRM (314 aa)). The segment at 182–200 (QQQTTTTSPKSLDPFFETY) is linker 1. Residues 201–292 (INALRKNLDT…VLYEAELAQM (92 aa)) form a coil 1B region. The tract at residues 293 to 316 (QTHVSDTSVVLSMDNNRNLDLDGI) is linker 12. A coil 2 region spans residues 317-455 (IAEVRAQYED…ATYRKLLEGE (139 aa)). The tail stretch occupies residues 456 to 524 (ECRMSGECKS…SSATITKRSP (69 aa)).

Belongs to the intermediate filament family. In terms of assembly, heterotetramer of two type I and two type II keratins. Keratin-4 is generally associated with keratin-13. Expressed in the dorsal and ventral epithelium of the tongue. Highest expression levels are detected in the suprabasal layer with low levels detected in the basal cell layer. Within the suprabasal layer expression is highest in the spinous cells, decreases in the granular cells and is not detected in the stratum corneum.

The sequence is that of Keratin, type II cytoskeletal 4 (Krt4) from Mus musculus (Mouse).